The primary structure comprises 114 residues: Reprimo-like protein (114 aa).

The chain crosses the membrane as a helical span at residues 61-81; the sequence is VVQIAVLCVLSLTVMFGIFFL.

This sequence belongs to the reprimo family.

It is found in the membrane. This Danio rerio (Zebrafish) protein is Reprimo-like protein (rprml).